The primary structure comprises 300 residues: MSVFINKDTRVIVQGITGSTALFHTKQMLEYGTNIVGGVTPGKGGTEAEGVPVFNTVAEAVQTTGANASVIYVPAPFAADAIMEAVDAELDLVICITEHIPVLDMVKVKRFMEGKKTRLIGPNCPGVITPEECKIGIMPGYIHKKGHVGVVSRSGTLTYEAVHQLSEAGVGQSTAVGIGGDPVNGTNFIDVLKAFNEDPDTHAVIMIGEIGGTAEEEAAEWVKANMTKPVVGFIGGKTAPPGKRMGHAGAIISGGKGTADEKIKTLNACGIEVAETPSVMGETLIKVLKEKNLFETCKTH.

Residues 17-20 (TGST), K43, and 96-98 (ITE) each bind CoA. Y159 provides a ligand contact to substrate. H247 (tele-phosphohistidine intermediate) is an active-site residue.

This sequence belongs to the succinate/malate CoA ligase alpha subunit family. As to quaternary structure, heterotetramer of two alpha and two beta subunits.

It carries out the reaction succinate + ATP + CoA = succinyl-CoA + ADP + phosphate. It catalyses the reaction GTP + succinate + CoA = succinyl-CoA + GDP + phosphate. It functions in the pathway carbohydrate metabolism; tricarboxylic acid cycle; succinate from succinyl-CoA (ligase route): step 1/1. Its function is as follows. Succinyl-CoA synthetase functions in the citric acid cycle (TCA), coupling the hydrolysis of succinyl-CoA to the synthesis of either ATP or GTP and thus represents the only step of substrate-level phosphorylation in the TCA. The alpha subunit of the enzyme binds the substrates coenzyme A and phosphate, while succinate binding and nucleotide specificity is provided by the beta subunit. This is Succinate--CoA ligase [ADP-forming] subunit alpha from Bacillus subtilis (strain 168).